We begin with the raw amino-acid sequence, 129 residues long: Phosphoribosyl-AMP cyclohydrolase (129 aa).

Residue aspartate 78 coordinates Mg(2+). Cysteine 79 contributes to the Zn(2+) binding site. Residues aspartate 80 and aspartate 82 each contribute to the Mg(2+) site. Residues cysteine 96 and cysteine 103 each contribute to the Zn(2+) site.

It belongs to the PRA-CH family. In terms of assembly, homodimer. Mg(2+) is required as a cofactor. Zn(2+) serves as cofactor.

It is found in the cytoplasm. It catalyses the reaction 1-(5-phospho-beta-D-ribosyl)-5'-AMP + H2O = 1-(5-phospho-beta-D-ribosyl)-5-[(5-phospho-beta-D-ribosylamino)methylideneamino]imidazole-4-carboxamide. The protein operates within amino-acid biosynthesis; L-histidine biosynthesis; L-histidine from 5-phospho-alpha-D-ribose 1-diphosphate: step 3/9. Catalyzes the hydrolysis of the adenine ring of phosphoribosyl-AMP. The chain is Phosphoribosyl-AMP cyclohydrolase from Nitrosomonas eutropha (strain DSM 101675 / C91 / Nm57).